The chain runs to 490 residues: Betaine aldehyde dehydrogenase (490 aa).

K(+) is bound by residues Ile27 and Asp93. Residue 150-152 (GAW) coordinates NAD(+). The active-site Charge relay system is Lys162. 176-179 (KPSE) serves as a coordination point for NAD(+). Val180 is a binding site for K(+). 230 to 233 (GTDT) provides a ligand contact to NAD(+). A K(+)-binding site is contributed by Leu246. Residue Glu252 is the Proton acceptor of the active site. NAD(+)-binding residues include Gly254, Cys286, and Glu387. The active-site Nucleophile is Cys286. Cysteine sulfenic acid (-SOH) is present on Cys286. K(+) is bound by residues Lys457 and Gly460. Residue Glu464 is the Charge relay system of the active site.

Belongs to the aldehyde dehydrogenase family. In terms of assembly, dimer of dimers. It depends on K(+) as a cofactor.

It catalyses the reaction betaine aldehyde + NAD(+) + H2O = glycine betaine + NADH + 2 H(+). It functions in the pathway amine and polyamine biosynthesis; betaine biosynthesis via choline pathway; betaine from betaine aldehyde: step 1/1. In terms of biological role, involved in the biosynthesis of the osmoprotectant glycine betaine. Catalyzes the irreversible oxidation of betaine aldehyde to the corresponding acid. This chain is Betaine aldehyde dehydrogenase, found in Pseudomonas fluorescens (strain Pf0-1).